The primary structure comprises 91 residues: Small ribosomal subunit protein uS19 (91 aa).

Belongs to the universal ribosomal protein uS19 family.

In terms of biological role, protein S19 forms a complex with S13 that binds strongly to the 16S ribosomal RNA. The chain is Small ribosomal subunit protein uS19 from Leptothrix cholodnii (strain ATCC 51168 / LMG 8142 / SP-6) (Leptothrix discophora (strain SP-6)).